A 196-amino-acid polypeptide reads, in one-letter code: Deoxyribose-phosphate aldolase (196 aa).

The Proton donor/acceptor role is filled by Asp91. The active-site Schiff-base intermediate with acetaldehyde is the Lys153. The active-site Proton donor/acceptor is Lys182.

Belongs to the DeoC/FbaB aldolase family. DeoC type 1 subfamily.

It localises to the cytoplasm. The enzyme catalyses 2-deoxy-D-ribose 5-phosphate = D-glyceraldehyde 3-phosphate + acetaldehyde. Its pathway is carbohydrate degradation; 2-deoxy-D-ribose 1-phosphate degradation; D-glyceraldehyde 3-phosphate and acetaldehyde from 2-deoxy-alpha-D-ribose 1-phosphate: step 2/2. Functionally, catalyzes a reversible aldol reaction between acetaldehyde and D-glyceraldehyde 3-phosphate to generate 2-deoxy-D-ribose 5-phosphate. The polypeptide is Deoxyribose-phosphate aldolase (Mycoplasma mycoides subsp. mycoides SC (strain CCUG 32753 / NCTC 10114 / PG1)).